A 749-amino-acid polypeptide reads, in one-letter code: Semaphorin-3B (749 aa).

A signal peptide spans 1–24 (MGRAGAAAVIPGLALLWAVGLGSA). One can recognise a Sema domain in the interval 30-513 (RLRLSFQELQ…SRSAVAQIAL (484 aa)). N-linked (GlcNAc...) asparagine glycosylation is present at N82. C102 and C113 are oxidised to a cystine. N124 carries an N-linked (GlcNAc...) asparagine glycan. Cystine bridges form between C131–C140, C269–C380, and C293–C340. A glycan (N-linked (GlcNAc...) asparagine) is linked at N427. 2 disulfides stabilise this stretch: C516/C534 and C644/C710. The Ig-like C2-type domain maps to 573 to 659 (PALLEHKVFG…GFTQPLRRLS (87 aa)). The tract at residues 702 to 749 (GSANSLRMCRPQPALQSLPLESRRKGRNRRTHAPEPRAERGPRSATHW) is disordered. Positions 733 to 743 (HAPEPRAERGP) are enriched in basic and acidic residues.

The protein belongs to the semaphorin family. As to expression, expressed abundantly but differentially in a variety of neural and nonneural tissues.

The protein localises to the secreted. It localises to the endoplasmic reticulum. Its function is as follows. Inhibits axonal extension by providing local signals to specify territories inaccessible for growing axons. This chain is Semaphorin-3B (SEMA3B), found in Homo sapiens (Human).